Reading from the N-terminus, the 373-residue chain is MMVRVMRYKKVPVKKIVNKIIDECDVILLVLDARDPEMTRNRELEKKIKAKGKKLIYVLNKADLVPKDILEKWKEVFGENTVFVSAKRRLGTKILREMIKQSLKEMGKKEGKVGIVGYPNVGKSSIINALTGKRKALTGSVAGLTKGEQWVRLTKNIKLMDTPGVLEMRDEDDLVISGALRLEKVENPIPPALKILSRINNFDNSIIKEYFGVDYEEVDEELLKKIGNKRSYLTKGGEVDLVRTAKTIIKEYQDGKLNYYKVDLKKYGQDRERDISFITKYLKDFPFIEDAKMIVTHLKDFDGLYKKIKKPVLGSEEIDGNIVVVSFGEKTKDACRKKVENLCRERNIEVLSKFGDKIGANNIYVAVGKRVKE.

The region spanning 14-168 is the CP-type G domain; that stretch reads KKIVNKIIDE…LMDTPGVLEM (155 aa). 117-124 lines the GTP pocket; that stretch reads GYPNVGKS.

It belongs to the TRAFAC class YlqF/YawG GTPase family.

This is an uncharacterized protein from Methanocaldococcus jannaschii (strain ATCC 43067 / DSM 2661 / JAL-1 / JCM 10045 / NBRC 100440) (Methanococcus jannaschii).